A 578-amino-acid chain; its full sequence is Arginine--tRNA ligase (578 aa).

Positions 123–133 (PNLAKEMHVGH) match the 'HIGH' region motif.

The protein belongs to the class-I aminoacyl-tRNA synthetase family. In terms of assembly, monomer.

It is found in the cytoplasm. The catalysed reaction is tRNA(Arg) + L-arginine + ATP = L-arginyl-tRNA(Arg) + AMP + diphosphate. The chain is Arginine--tRNA ligase from Hahella chejuensis (strain KCTC 2396).